We begin with the raw amino-acid sequence, 180 residues long: Large ribosomal subunit protein uL5 (180 aa).

Belongs to the universal ribosomal protein uL5 family. Part of the 50S ribosomal subunit; part of the 5S rRNA/L5/L18/L25 subcomplex. Contacts the 5S rRNA and the P site tRNA. Forms a bridge to the 30S subunit in the 70S ribosome.

In terms of biological role, this is one of the proteins that bind and probably mediate the attachment of the 5S RNA into the large ribosomal subunit, where it forms part of the central protuberance. In the 70S ribosome it contacts protein S13 of the 30S subunit (bridge B1b), connecting the 2 subunits; this bridge is implicated in subunit movement. Contacts the P site tRNA; the 5S rRNA and some of its associated proteins might help stabilize positioning of ribosome-bound tRNAs. The sequence is that of Large ribosomal subunit protein uL5 from Streptococcus mutans serotype c (strain ATCC 700610 / UA159).